The following is a 682-amino-acid chain: Methionine--tRNA ligase (682 aa).

The 'HIGH' region motif lies at 14–24; it reads PYANGSIHLGH. Zn(2+)-binding residues include cysteine 145, cysteine 148, cysteine 158, and cysteine 161. A 'KMSKS' region motif is present at residues 331 to 335; the sequence is KMSKS. Residue lysine 334 coordinates ATP. In terms of domain architecture, tRNA-binding spans 580 to 682; that stretch reads AFAAVDLRVA…SGAKPGQRIK (103 aa).

Belongs to the class-I aminoacyl-tRNA synthetase family. MetG type 1 subfamily. In terms of assembly, homodimer. Zn(2+) serves as cofactor.

The protein resides in the cytoplasm. It carries out the reaction tRNA(Met) + L-methionine + ATP = L-methionyl-tRNA(Met) + AMP + diphosphate. Functionally, is required not only for elongation of protein synthesis but also for the initiation of all mRNA translation through initiator tRNA(fMet) aminoacylation. This chain is Methionine--tRNA ligase, found in Pseudomonas savastanoi pv. phaseolicola (strain 1448A / Race 6) (Pseudomonas syringae pv. phaseolicola (strain 1448A / Race 6)).